The sequence spans 83 residues: Putative defensin-like protein 131 (83 aa).

The first 34 residues, 1 to 34, serve as a signal peptide directing secretion; the sequence is MAKNRVLTIFYCTIYYCICFKYVLLGMVVEKTQG. Cystine bridges form between C37-C83, C46-C65, C51-C77, and C55-C79.

This sequence belongs to the DEFL family.

The protein resides in the secreted. This is Putative defensin-like protein 131 (LCR29) from Arabidopsis thaliana (Mouse-ear cress).